A 260-amino-acid polypeptide reads, in one-letter code: Triosephosphate isomerase (260 aa).

Substrate is bound at residue 11–13 (NWK). The active-site Electrophile is the His103. Catalysis depends on Glu175, which acts as the Proton acceptor. Substrate is bound by residues Gly181, Ser220, and 241 to 242 (GG).

Belongs to the triosephosphate isomerase family. Homodimer.

It is found in the cytoplasm. It carries out the reaction D-glyceraldehyde 3-phosphate = dihydroxyacetone phosphate. The protein operates within carbohydrate biosynthesis; gluconeogenesis. It functions in the pathway carbohydrate degradation; glycolysis; D-glyceraldehyde 3-phosphate from glycerone phosphate: step 1/1. Its function is as follows. Involved in the gluconeogenesis. Catalyzes stereospecifically the conversion of dihydroxyacetone phosphate (DHAP) to D-glyceraldehyde-3-phosphate (G3P). The chain is Triosephosphate isomerase from Shewanella pealeana (strain ATCC 700345 / ANG-SQ1).